We begin with the raw amino-acid sequence, 415 residues long: Queuine tRNA-ribosyltransferase accessory subunit 2 (415 aa).

Residues Cys351, Cys353, Cys356, and His382 each contribute to the Zn(2+) site.

Belongs to the queuine tRNA-ribosyltransferase family. QTRT2 subfamily. Heterodimer of a catalytic subunit QTRT1 and an accessory subunit QTRT2. Zn(2+) serves as cofactor.

The protein localises to the cytoplasm. The protein resides in the mitochondrion outer membrane. In terms of biological role, non-catalytic subunit of the queuine tRNA-ribosyltransferase (TGT) that catalyzes the base-exchange of a guanine (G) residue with queuine (Q) at position 34 (anticodon wobble position) in tRNAs with GU(N) anticodons (tRNA-Asp, -Asn, -His and -Tyr), resulting in the hypermodified nucleoside queuosine (7-(((4,5-cis-dihydroxy-2-cyclopenten-1-yl)amino)methyl)-7-deazaguanosine). The chain is Queuine tRNA-ribosyltransferase accessory subunit 2 from Pongo abelii (Sumatran orangutan).